The primary structure comprises 343 residues: Ribosomal RNA small subunit methyltransferase C (343 aa).

Belongs to the methyltransferase superfamily. RsmC family. As to quaternary structure, monomer.

The protein resides in the cytoplasm. The enzyme catalyses guanosine(1207) in 16S rRNA + S-adenosyl-L-methionine = N(2)-methylguanosine(1207) in 16S rRNA + S-adenosyl-L-homocysteine + H(+). Its function is as follows. Specifically methylates the guanine in position 1207 of 16S rRNA in the 30S particle. The protein is Ribosomal RNA small subunit methyltransferase C of Escherichia coli (strain K12 / DH10B).